Here is a 344-residue protein sequence, read N- to C-terminus: Anthranilate phosphoribosyltransferase (344 aa).

5-phospho-alpha-D-ribose 1-diphosphate contacts are provided by residues Gly80, 83 to 84, Thr88, 90 to 93, 108 to 116, and Ser120; these read GD, NVST, and KHGNRSVSS. Anthranilate is bound at residue Gly80. Ser92 is a Mg(2+) binding site. Residue Asn111 participates in anthranilate binding. Arg166 provides a ligand contact to anthranilate. 2 residues coordinate Mg(2+): Asp225 and Glu226.

Belongs to the anthranilate phosphoribosyltransferase family. As to quaternary structure, homodimer. Mg(2+) is required as a cofactor.

The enzyme catalyses N-(5-phospho-beta-D-ribosyl)anthranilate + diphosphate = 5-phospho-alpha-D-ribose 1-diphosphate + anthranilate. It functions in the pathway amino-acid biosynthesis; L-tryptophan biosynthesis; L-tryptophan from chorismate: step 2/5. Catalyzes the transfer of the phosphoribosyl group of 5-phosphorylribose-1-pyrophosphate (PRPP) to anthranilate to yield N-(5'-phosphoribosyl)-anthranilate (PRA). The protein is Anthranilate phosphoribosyltransferase of Legionella pneumophila (strain Paris).